The following is a 677-amino-acid chain: Heat shock transcription factor (677 aa).

2 disordered regions span residues 1 to 56 (MGHN…DDSN) and 115 to 164 (STSS…SQQP). Polar residues-rich tracts occupy residues 115-131 (STSSAAKLSDGDLTNAT) and 143-164 (QPSSESQSHSNGYHKQGQSQQP). Residues 193–297 (ARPAFVNKLW…EYLLENIVRQ (105 aa)) mediate DNA binding. Residues 320 to 373 (ELETVKYNQLAIAEDLKRITKDNEMLWKENMMARERHQSQQQVLEKLLRFLSSV) are involved in trimerization. Low complexity-rich tracts occupy residues 400–416 (NHMSNNNHNNTGNINPN) and 457–501 (RSMS…QGQQ). 3 disordered regions span residues 400–444 (NHMS…VPLQ), 457–541 (RSMS…NQYS), and 606–677 (KLNP…RRAA). The segment at 466–677 (NLNQRQSPQN…NNGQKRRRAA (212 aa)) is activatory. Polar residues-rich tracts occupy residues 502–541 (FSYPIQGGNQMMNQLGSPIGTQVGSPVGSQYGNQYGNQYS) and 629–641 (FANTGGSGQSEQP). A compositionally biased stretch (basic and acidic residues) spans 650 to 669 (EELRNSRLHEPDRSFEEKNN).

It belongs to the HSF family. In terms of assembly, homotrimer. Homotrimerization increases the affinity of HSF1 to DNA. Post-translationally, exhibits temperature-dependent phosphorylation.

It localises to the nucleus. Its function is as follows. DNA-binding transcription factor that specifically binds heat shock promoter elements (HSE) and activates transcription. The sequence is that of Heat shock transcription factor from Kluyveromyces lactis (strain ATCC 8585 / CBS 2359 / DSM 70799 / NBRC 1267 / NRRL Y-1140 / WM37) (Yeast).